The following is a 349-amino-acid chain: MSLPDFTMRSLLDAGAHFGHQSHRWNPKMEPFIFGTRNNIHIIDLAQTVPLLHQALKAVSDTVARGGRVLFVGTKRQAQDAIADAAHRSAQYYINSRWLGGMLTNWKTISASIQRLRKVEETLQGGGSGLTKKERLMMSRERDKLEKALGGIKEMGGIPDLIFVIDTNKEQLAIKEAERLHIPVAAILDTNCNPDGITFPIPGNDDAGRAIALYCDLIARAALDGIARGQGAGGVDFGEADQPPAEDLPAADLPAETPEPTTAVTEAYEAPAEAFELLTAPRGAPDDLGKLPGIGPQIVKKLNDAGLYHFWQIAAMTPEDAAKTDHDLKLGGRIERDGWVNVARSLVAA.

The protein belongs to the universal ribosomal protein uS2 family.

The protein is Small ribosomal subunit protein uS2 of Methylocella silvestris (strain DSM 15510 / CIP 108128 / LMG 27833 / NCIMB 13906 / BL2).